The chain runs to 402 residues: NADH dehydrogenase [ubiquinone] 1 alpha subcomplex subunit 9, mitochondrial (402 aa).

The N-terminal 43 residues, 1 to 43 (MQVVSRRLVQRPLVGGASIYSSSSLRSLYGVSNHLNGTDNCRY), are a transit peptide targeting the mitochondrion.

The protein belongs to the complex I NDUFA9 subunit family. Complex I is composed of at least 49 different subunits. This a component of the hydrophobic protein fraction. Requires FAD as cofactor.

The protein resides in the mitochondrion matrix. Functionally, accessory subunit of the mitochondrial membrane respiratory chain NADH dehydrogenase (Complex I), that is believed not to be involved in catalysis. Complex I functions in the transfer of electrons from NADH to the respiratory chain. The immediate electron acceptor for the enzyme is believed to be ubiquinone. This is NADH dehydrogenase [ubiquinone] 1 alpha subcomplex subunit 9, mitochondrial from Arabidopsis thaliana (Mouse-ear cress).